The chain runs to 65 residues: Large ribosomal subunit protein bL35 (65 aa).

Residues 1–40 (MPKMKTNSGSKKRFALTGTGKIKRKHAFHSHILTKKSKKR) are disordered. Residues 21–40 (KIKRKHAFHSHILTKKSKKR) are compositionally biased toward basic residues.

This sequence belongs to the bacterial ribosomal protein bL35 family.

The sequence is that of Large ribosomal subunit protein bL35 from Bacteroides fragilis (strain ATCC 25285 / DSM 2151 / CCUG 4856 / JCM 11019 / LMG 10263 / NCTC 9343 / Onslow / VPI 2553 / EN-2).